A 117-amino-acid polypeptide reads, in one-letter code: UPF0122 protein TTE1463 (117 aa).

The protein belongs to the UPF0122 family.

In terms of biological role, might take part in the signal recognition particle (SRP) pathway. This is inferred from the conservation of its genetic proximity to ftsY/ffh. May be a regulatory protein. This Caldanaerobacter subterraneus subsp. tengcongensis (strain DSM 15242 / JCM 11007 / NBRC 100824 / MB4) (Thermoanaerobacter tengcongensis) protein is UPF0122 protein TTE1463.